Reading from the N-terminus, the 237-residue chain is Sugar fermentation stimulation protein homolog (237 aa).

The protein belongs to the SfsA family.

This chain is Sugar fermentation stimulation protein homolog, found in Actinobacillus pleuropneumoniae serotype 3 (strain JL03).